The following is a 319-amino-acid chain: tRNA-cytidine(32) 2-sulfurtransferase (319 aa).

The short motif at 43–48 (SGGKDS) is the PP-loop motif element. [4Fe-4S] cluster is bound by residues Cys-118, Cys-121, and Cys-209.

This sequence belongs to the TtcA family. In terms of assembly, homodimer. It depends on Mg(2+) as a cofactor. Requires [4Fe-4S] cluster as cofactor.

It is found in the cytoplasm. It carries out the reaction cytidine(32) in tRNA + S-sulfanyl-L-cysteinyl-[cysteine desulfurase] + AH2 + ATP = 2-thiocytidine(32) in tRNA + L-cysteinyl-[cysteine desulfurase] + A + AMP + diphosphate + H(+). It participates in tRNA modification. Catalyzes the ATP-dependent 2-thiolation of cytidine in position 32 of tRNA, to form 2-thiocytidine (s(2)C32). The sulfur atoms are provided by the cysteine/cysteine desulfurase (IscS) system. This is tRNA-cytidine(32) 2-sulfurtransferase from Neisseria meningitidis serogroup A / serotype 4A (strain DSM 15465 / Z2491).